A 365-amino-acid chain; its full sequence is Peptide chain release factor 2 (365 aa).

An N5-methylglutamine modification is found at glutamine 252.

The protein belongs to the prokaryotic/mitochondrial release factor family. In terms of processing, methylated by PrmC. Methylation increases the termination efficiency of RF2.

The protein resides in the cytoplasm. Functionally, peptide chain release factor 2 directs the termination of translation in response to the peptide chain termination codons UGA and UAA. The protein is Peptide chain release factor 2 of Tolumonas auensis (strain DSM 9187 / NBRC 110442 / TA 4).